An 84-amino-acid chain; its full sequence is Small ribosomal subunit protein bS16 (84 aa).

This sequence belongs to the bacterial ribosomal protein bS16 family.

The polypeptide is Small ribosomal subunit protein bS16 (Burkholderia mallei (strain NCTC 10247)).